Consider the following 414-residue polypeptide: 2-epi-5-epi-valiolone synthase (414 aa).

NAD(+) contacts are provided by residues Asp70, 101-104 (ESAK), 134-138 (GVLTD), 158-159 (TT), Lys171, Lys180, and 198-201 (FLAT). Residue Lys171 is part of the active site. Zn(2+)-binding residues include Glu213, His284, and His300.

The protein belongs to the sugar phosphate cyclases superfamily. EEVS family. NAD(+) is required as a cofactor. The cofactor is Zn(2+).

The catalysed reaction is D-sedoheptulose 7-phosphate = 2-epi-5-epi-valiolone + phosphate. The protein operates within antibiotic biosynthesis. Its function is as follows. Catalyzes the cyclization of D-sedoheptulose 7-phosphate to 2-epi-5-epi-valiolone. Involved in validamycin biosynthesis. This is 2-epi-5-epi-valiolone synthase from Streptomyces hygroscopicus subsp. jinggangensis (strain 5008).